A 320-amino-acid polypeptide reads, in one-letter code: Cytochrome f (320 aa).

A signal peptide spans M1–A35. Positions 36, 56, 59, and 60 each coordinate heme. The chain crosses the membrane as a helical span at residues V286–K306.

The protein belongs to the cytochrome f family. The 4 large subunits of the cytochrome b6-f complex are cytochrome b6, subunit IV (17 kDa polypeptide, petD), cytochrome f and the Rieske protein, while the 4 small subunits are PetG, PetL, PetM and PetN. The complex functions as a dimer. Heme serves as cofactor.

Its subcellular location is the plastid. The protein localises to the chloroplast thylakoid membrane. Component of the cytochrome b6-f complex, which mediates electron transfer between photosystem II (PSII) and photosystem I (PSI), cyclic electron flow around PSI, and state transitions. In Drimys granadensis, this protein is Cytochrome f.